Here is a 351-residue protein sequence, read N- to C-terminus: Large ribosomal subunit protein uL3 (351 aa).

Disordered stretches follow at residues 1–31 and 246–271; these read MGHR…TPRT and KGSR…GQLG.

Belongs to the universal ribosomal protein uL3 family. As to quaternary structure, part of the 50S ribosomal subunit. Forms a cluster with proteins L14 and L24e.

Its function is as follows. One of the primary rRNA binding proteins, it binds directly near the 3'-end of the 23S rRNA, where it nucleates assembly of the 50S subunit. The sequence is that of Large ribosomal subunit protein uL3 from Saccharolobus islandicus (strain M.16.27) (Sulfolobus islandicus).